The sequence spans 197 residues: Carbohydrate-binding X8 domain-containing protein (197 aa).

The signal sequence occupies residues 1 to 19 (MAVLLPLFLLSFMFTYSNA). Over residues 101 to 113 (SCLSSSSSNGTPT) the composition is skewed to low complexity. Residues 101 to 176 (SCLSSSSSNG…TSGDPNGGEE (76 aa)) are disordered. Residues 116-125 (YPSTGNSTTA) are compositionally biased toward polar residues. A compositionally biased stretch (low complexity) spans 126–145 (SPGTTNPSTGNSTNSTLPTN). A compositionally biased stretch (polar residues) spans 146-155 (DKPTSSTITF). Residues 156–170 (PDSTTMGPSSSTSGD) show a composition bias toward low complexity. A lipid anchor (GPI-anchor amidated asparagine) is attached at Asn-172. The propeptide at 173–197 (GGEELSVRTTTIILLTTIAAVALRV) is removed in mature form.

Expressed in the sieve elements.

It localises to the cell membrane. The protein is Carbohydrate-binding X8 domain-containing protein of Arabidopsis thaliana (Mouse-ear cress).